Here is a 77-residue protein sequence, read N- to C-terminus: Thioredoxin (77 aa).

Residues Cys11 and Cys14 each act as nucleophile in the active site. Cysteines 11 and 14 form a disulfide.

This sequence belongs to the glutaredoxin family.

Its function is as follows. Does not function as a glutathione-disulfide oxidoreductase in the presence of glutathione and glutathione reductase. Has low thioredoxin activity in vitro. In Methanothermobacter thermautotrophicus (strain ATCC 29096 / DSM 1053 / JCM 10044 / NBRC 100330 / Delta H) (Methanobacterium thermoautotrophicum), this protein is Thioredoxin.